Here is an 850-residue protein sequence, read N- to C-terminus: Probable beta-glucosidase J (850 aa).

N-linked (GlcNAc...) asparagine glycans are attached at residues Asn-43 and Asn-52. Asp-254 is an active-site residue. The PA14 domain occupies 423-583 (TGERGYTFRV…DAETAIKQAV (161 aa)). The N-linked (GlcNAc...) asparagine glycan is linked to Asn-508.

It belongs to the glycosyl hydrolase 3 family.

Its subcellular location is the secreted. It catalyses the reaction Hydrolysis of terminal, non-reducing beta-D-glucosyl residues with release of beta-D-glucose.. It participates in glycan metabolism; cellulose degradation. Functionally, beta-glucosidases are one of a number of cellulolytic enzymes involved in the degradation of cellulosic biomass. Catalyzes the last step releasing glucose from the inhibitory cellobiose. The sequence is that of Probable beta-glucosidase J (bglJ) from Emericella nidulans (strain FGSC A4 / ATCC 38163 / CBS 112.46 / NRRL 194 / M139) (Aspergillus nidulans).